An 888-amino-acid polypeptide reads, in one-letter code: E3 ubiquitin-protein ligase SH3RF1 (888 aa).

The RING-type zinc finger occupies 12 to 53; that stretch reads CPVCLERLDASAKVLPCQHTFCKRCLLGIVGSRNELRCPECR. Polar residues predominate over residues 108 to 127; it reads SSKDLQSSQGGQQPRVQSWS. Positions 108–128 are disordered; it reads SSKDLQSSQGGQQPRVQSWSP. 2 SH3 domains span residues 134-193 and 196-259; these read PQLP…IIKP and QPPP…FNSA. The disordered stretch occupies residues 275–321; that stretch reads DAGECSSAAAQSSTAPKHSDTKKNTKKRHSFTSLTMANKSSQASQNR. Residues 292-362 form an interaction with RAC1 region; that stretch reads HSDTKKNTKK…APSQVHISTT (71 aa). Ser304 carries the post-translational modification Phosphoserine. Over residues 305–321 the composition is skewed to polar residues; it reads FTSLTMANKSSQASQNR. Positions 440–543 are interaction with AKT2; that stretch reads HLRPQTRPSV…STAGGPAQKL (104 aa). The SH3 3 domain occupies 445–506; it reads TRPSVYVAIY…PGNYVAPVTR (62 aa). 3 disordered regions span residues 516–548, 620–639, and 684–741; these read VPMSTAGQTSRGVTMVSPSTAGGPAQKLQGNGV, SVGLSHHSLASPQPAPLMPG, and TVLP…ASPT. A compositionally biased stretch (polar residues) spans 520–535; the sequence is TAGQTSRGVTMVSPST. Residue Ser532 is modified to Phosphoserine. A compositionally biased stretch (polar residues) spans 692–704; it reads SPDSASSACGNSS. Residues 707–718 are compositionally biased toward basic and acidic residues; that stretch reads KPDKDSKKEKKG. Ser735 carries the phosphoserine modification. Residues 829-888 form the SH3 4 domain; the sequence is VVCERHRVVVSYPPQSEAELELKEGDIVFVHKKREDGWFKGTLQRNGKTGLFPGSFVENI.

The protein belongs to the SH3RF family. Interacts with RAC1; in a GTP-dependent manner. Interacts with MAP3K10/MLK2 and MAP3K11/MLK3. Interacts with MAPK8IP; this interaction leads to the PJAC complex (POSH-JIP or SH3RF1/MAPK8IP apoptotic complex) with a 1:1 ratio. Interacts with SIAH1. Interacts with HERP1. Probably part of a signaling complex that may contain SH3RF1, MAPK8IP, DLK1, MAP2K4/MKK4, MAP2K7/MKK7, MAPK8/JNK1, MAPK9/JNK2, AKT1 and AKT2. Found in a complex with RAC2, MAP3K7/TAK1, MAP2K7/MKK7, MAPK8IP1/JIP1, MAPK8/JNK1 and MAPK9/JNK2. Found in a complex with RAC1, MAP3K11/MLK3, MAP2K7/MKK7, MAPK8IP1/JIP1 and MAPK8/JNK1. Interacts with SH3RF2. Phosphorylated at Ser-304 by AKT1 and AKT2. When phosphorylated, it has reduced ability to bind Rac. Post-translationally, autoubiquitinated. Ubiquitinated by SH3RF2, leading to proteasome-mediated degradation.

Its subcellular location is the cytoplasm. The protein localises to the perinuclear region. The protein resides in the cell projection. It is found in the lamellipodium. It localises to the golgi apparatus. Its subcellular location is the trans-Golgi network. The catalysed reaction is S-ubiquitinyl-[E2 ubiquitin-conjugating enzyme]-L-cysteine + [acceptor protein]-L-lysine = [E2 ubiquitin-conjugating enzyme]-L-cysteine + N(6)-ubiquitinyl-[acceptor protein]-L-lysine.. It functions in the pathway protein modification; protein ubiquitination. Functionally, has E3 ubiquitin-protein ligase activity. In the absence of an external substrate, it can catalyze self-ubiquitination. Stimulates ubiquitination of potassium channel KCNJ1, enhancing it's dynamin-dependent and clathrin-independent endocytosis. Acts as a scaffold protein that coordinates with MAPK8IP1/JIP1 in organizing different components of the JNK pathway, including RAC1 or RAC2, MAP3K11/MLK3 or MAP3K7/TAK1, MAP2K7/MKK7, MAPK8/JNK1 and/or MAPK9/JNK2 into a functional multiprotein complex to ensure the effective activation of the JNK signaling pathway. Regulates the differentiation of CD4(+) and CD8(+) T-cells and promotes T-helper 1 (Th1) cell differentiation. Regulates the activation of MAPK8/JNK1 and MAPK9/JNK2 in CD4(+) T-cells and the activation of MAPK8/JNK1 in CD8(+) T-cells. Plays a crucial role in the migration of neocortical neurons in the developing brain. Controls proper cortical neuronal migration and the formation of proximal cytoplasmic dilation in the leading process (PCDLP) in migratory neocortical neurons by regulating the proper localization of activated RAC1 and F-actin assembly. In terms of biological role, (Microbial infection) Plays an essential role in the targeting of HIV-1 Gag to the plasma membrane, this function is dependent on it's RING domain, and hence it's E3 ligase activity. The protein is E3 ubiquitin-protein ligase SH3RF1 (SH3RF1) of Homo sapiens (Human).